Here is a 302-residue protein sequence, read N- to C-terminus: Recombination-associated protein RdgC (302 aa).

It belongs to the RdgC family.

Its subcellular location is the cytoplasm. The protein localises to the nucleoid. May be involved in recombination. This Halorhodospira halophila (strain DSM 244 / SL1) (Ectothiorhodospira halophila (strain DSM 244 / SL1)) protein is Recombination-associated protein RdgC.